A 745-amino-acid chain; its full sequence is Cytoskeleton-associated protein 2-like (745 aa).

Disordered regions lie at residues 26 to 305, 319 to 362, 422 to 483, and 608 to 638; these read KGKL…VNRV, PATE…LGPQ, FPPQ…TYKR, and EAVTSDTSAAGTNTTSAEELAKEESEQPCPS. 2 stretches are compositionally biased toward polar residues: residues 67–89 and 101–136; these read SKTTRPINIKFQTKPASITASQK and GLTSRCFSSNTDCKQSSKPQQQPRAVSFTAGLSRNP. The KEN box signature appears at 183-185; it reads KEN. A compositionally biased stretch (basic and acidic residues) spans 192–202; it reads KPEKPDPELHS. A Glycyl lysine isopeptide (Lys-Gly) (interchain with G-Cter in SUMO1); alternate cross-link involves residue Lys-195. Lys-195 participates in a covalent cross-link: Glycyl lysine isopeptide (Lys-Gly) (interchain with G-Cter in SUMO2); alternate. Composition is skewed to polar residues over residues 205–216, 224–233, 242–253, and 284–301; these read KPNTGSSNQTQK, LSKSSVTQTA, FIRNTQIRTQAV, and NKTQTSKKPMTKNTQDIT. Positions 427–442 are enriched in polar residues; that stretch reads HFLNKTAPRTQASTAA. Over residues 459-475 the composition is skewed to basic and acidic residues; sequence KKPEGEDRRKQLEEWQK. The span at 608 to 624 shows a compositional bias: polar residues; it reads EAVTSDTSAAGTNTTSA. Ser-745 carries the post-translational modification Phosphoserine.

This sequence belongs to the CKAP2 family. Post-translationally, ubiquitinated by the anaphase promoting complex/cyclosome (APC/C). As to expression, highly expressed in regions of active neurogenesis and neural stem/progenitor cells (NSPCs), both embryonic and adult, not detected in lung, liver, kidney, heart, and skeletal muscle.

The protein localises to the cytoplasm. It is found in the cytoskeleton. The protein resides in the spindle pole. Microtubule-associated protein required for mitotic spindle formation and cell-cycle progression in neural progenitor cells. The sequence is that of Cytoskeleton-associated protein 2-like (Ckap2l) from Mus musculus (Mouse).